The primary structure comprises 202 residues: GTP cyclohydrolase 1 (202 aa).

Residues Cys90, His93, and Cys163 each contribute to the Zn(2+) site.

The protein belongs to the GTP cyclohydrolase I family. Toroid-shaped homodecamer, composed of two pentamers of five dimers.

The catalysed reaction is GTP + H2O = 7,8-dihydroneopterin 3'-triphosphate + formate + H(+). It participates in cofactor biosynthesis; 7,8-dihydroneopterin triphosphate biosynthesis; 7,8-dihydroneopterin triphosphate from GTP: step 1/1. The sequence is that of GTP cyclohydrolase 1 (folE) from Mycobacterium bovis (strain ATCC BAA-935 / AF2122/97).